The sequence spans 504 residues: Glycerol kinase (504 aa).

Thr-12 lines the ADP pocket. ATP-binding residues include Thr-12, Thr-13, and Ser-14. Thr-12 is a sn-glycerol 3-phosphate binding site. An ADP-binding site is contributed by Arg-16. Sn-glycerol 3-phosphate-binding residues include Arg-82, Glu-83, Tyr-134, and Asp-244. 5 residues coordinate glycerol: Arg-82, Glu-83, Tyr-134, Asp-244, and Gln-245. Thr-266 and Gly-309 together coordinate ADP. Positions 266, 309, 313, and 410 each coordinate ATP. ADP contacts are provided by Gly-410 and Asn-414.

This sequence belongs to the FGGY kinase family. As to quaternary structure, homotetramer and homodimer (in equilibrium).

The enzyme catalyses glycerol + ATP = sn-glycerol 3-phosphate + ADP + H(+). Its pathway is polyol metabolism; glycerol degradation via glycerol kinase pathway; sn-glycerol 3-phosphate from glycerol: step 1/1. With respect to regulation, activated by phosphorylation and inhibited by fructose 1,6-bisphosphate (FBP). Key enzyme in the regulation of glycerol uptake and metabolism. Catalyzes the phosphorylation of glycerol to yield sn-glycerol 3-phosphate. The chain is Glycerol kinase from Alkaliphilus oremlandii (strain OhILAs) (Clostridium oremlandii (strain OhILAs)).